A 442-amino-acid polypeptide reads, in one-letter code: D-serine dehydratase 1 (442 aa).

An N6-(pyridoxal phosphate)lysine modification is found at K118.

It belongs to the serine/threonine dehydratase family. DsdA subfamily. In terms of assembly, monomer. Pyridoxal 5'-phosphate serves as cofactor.

The enzyme catalyses D-serine = pyruvate + NH4(+). The polypeptide is D-serine dehydratase 1 (Escherichia coli O6:K15:H31 (strain 536 / UPEC)).